Here is a 634-residue protein sequence, read N- to C-terminus: Chaperone protein dnaK2 (634 aa).

Thr197 is subject to Phosphothreonine; by autocatalysis. Positions 601 to 623 are enriched in low complexity; it reads GAAAAESGADAGAAGAGDSSSGD. Residues 601 to 634 are disordered; the sequence is GAAAAESGADAGAAGAGDSSSGDDVIDAEFTESK. Acidic residues predominate over residues 624–634; that stretch reads DVIDAEFTESK.

This sequence belongs to the heat shock protein 70 family.

In terms of biological role, acts as a chaperone. The sequence is that of Chaperone protein dnaK2 (dnaK2) from Prochlorococcus marinus (strain MIT 9313).